A 263-amino-acid chain; its full sequence is Putative 2-aminoethylphosphonate transport system permease protein PhnV (263 aa).

Helical transmembrane passes span 13–33 (GVVA…VILM), 69–89 (LTIG…AALA), 104–124 (VFYL…LVAF), 131–151 (MNGT…AFTF), 185–205 (LPLL…LSMG), and 233–253 (NIAD…LLMM). The 189-residue stretch at 65–253 (LLASLTIGFC…LVAITLLLMM (189 aa)) folds into the ABC transmembrane type-1 domain.

It belongs to the binding-protein-dependent transport system permease family.

Its subcellular location is the cell inner membrane. Probably part of the PhnSTUV complex (TC 3.A.1.11.5) involved in 2-aminoethylphosphonate import. Probably responsible for the translocation of the substrate across the membrane. This is Putative 2-aminoethylphosphonate transport system permease protein PhnV (phnV) from Salmonella typhi.